The sequence spans 395 residues: Univin (395 aa).

A signal peptide spans 1 to 19; that stretch reads MDVSKVLILTLIWLLTADS. A propeptide spanning residues 20-272 is cleaved from the precursor; sequence APPDYVTLTR…CSKRNRRNKR (253 aa). The N-linked (GlcNAc...) asparagine glycan is linked to Asn-50. The segment at 69 to 97 is disordered; sequence EGAAASRGGETEIGKEEEEDGRPCSETKL. Residues Asn-116 and Asn-336 are each glycosylated (N-linked (GlcNAc...) asparagine). Cystine bridges form between Cys-294/Cys-360, Cys-323/Cys-392, and Cys-327/Cys-394.

This sequence belongs to the TGF-beta family. In terms of assembly, homodimer; disulfide-linked.

It localises to the secreted. Its function is as follows. Could have a critical role in early developmental decisions in the sea urchin embryo. This is Univin from Strongylocentrotus purpuratus (Purple sea urchin).